A 90-amino-acid chain; its full sequence is DNA-directed RNA polymerase subunit omega (90 aa).

Positions 69–90 (RQEQQEQEAAELAAVSSIAHNR) are disordered.

This sequence belongs to the RNA polymerase subunit omega family. As to quaternary structure, the RNAP catalytic core consists of 2 alpha, 1 beta, 1 beta' and 1 omega subunit. When a sigma factor is associated with the core the holoenzyme is formed, which can initiate transcription.

The catalysed reaction is RNA(n) + a ribonucleoside 5'-triphosphate = RNA(n+1) + diphosphate. Its function is as follows. Promotes RNA polymerase assembly. Latches the N- and C-terminal regions of the beta' subunit thereby facilitating its interaction with the beta and alpha subunits. The polypeptide is DNA-directed RNA polymerase subunit omega (Vibrio parahaemolyticus serotype O3:K6 (strain RIMD 2210633)).